Consider the following 20-residue polypeptide: Antifreeze protein (20 aa).

In terms of processing, N-glycosylated and O-glycosylated.

The protein localises to the secreted. The protein resides in the extracellular space. Its function is as follows. Antifreeze proteins bind to the surface of ice crystals and inhibit the growth of these crystals, this inhibition causes thermal hysteresis. Causes the shape of ice crystals to change from hexagonal to a bipyramidal shape with rugged facets. Inhibits recrystallization of ice crystals. This Antarctomyces psychrotrophicus protein is Antifreeze protein.